A 385-amino-acid chain; its full sequence is ATP phosphoribosyltransferase regulatory subunit (385 aa).

Belongs to the class-II aminoacyl-tRNA synthetase family. HisZ subfamily. As to quaternary structure, heteromultimer composed of HisG and HisZ subunits.

It is found in the cytoplasm. The protein operates within amino-acid biosynthesis; L-histidine biosynthesis; L-histidine from 5-phospho-alpha-D-ribose 1-diphosphate: step 1/9. Its function is as follows. Required for the first step of histidine biosynthesis. May allow the feedback regulation of ATP phosphoribosyltransferase activity by histidine. The polypeptide is ATP phosphoribosyltransferase regulatory subunit (Bordetella petrii (strain ATCC BAA-461 / DSM 12804 / CCUG 43448)).